The chain runs to 353 residues: Inositol 3-kinase (353 aa).

ATP contacts are provided by residues Ser-197, Gly-247 to Asp-250, and Asn-274. The Proton acceptor role is filled by Asp-250.

Belongs to the carbohydrate kinase pfkB family.

The catalysed reaction is myo-inositol + ATP = 1D-myo-inositol 3-phosphate + ADP + H(+). Functionally, kinase that phosphorylates myo-inositol to produce multiple myo-inositol monophosphates. Participates in phytic acid biosynthesis in developing seeds. Phytic acid is the primary storage form of phosphorus in cereal grains and other plant seeds. This Arabidopsis thaliana (Mouse-ear cress) protein is Inositol 3-kinase.